The primary structure comprises 474 residues: 6-phospho-beta-glucosidase AscB (474 aa).

Glutamate 180 (proton donor) is an active-site residue. The Nucleophile role is filled by glutamate 372.

Belongs to the glycosyl hydrolase 1 family.

It carries out the reaction 6-phospho-beta-D-glucosyl-(1-&gt;4)-D-glucose + H2O = D-glucose 6-phosphate + D-glucose. In terms of biological role, can hydrolyze salicin, cellobiose, and probably arbutin. This Escherichia coli (strain K12) protein is 6-phospho-beta-glucosidase AscB (ascB).